The following is a 237-amino-acid chain: Class B acid phosphatase (237 aa).

The first 25 residues, 1–25 (MRKITLALSAACLLFSLNNAVVARA), serve as a signal peptide directing secretion. D69 functions as the Nucleophile in the catalytic mechanism. Mg(2+)-binding residues include D69 and D71. D71 serves as the catalytic Proton donor. Substrate-binding positions include 137–138 (TG) and K177. D192 contributes to the Mg(2+) binding site.

This sequence belongs to the class B bacterial acid phosphatase family. In terms of assembly, homotetramer. Mg(2+) is required as a cofactor.

The protein localises to the periplasm. It catalyses the reaction a phosphate monoester + H2O = an alcohol + phosphate. Functionally, dephosphorylates several organic phosphate monoesters. Also has a phosphotransferase activity catalyzing the transfer of low-energy phosphate groups from organic phosphate monoesters to free hydroxyl groups of various organic compounds. The chain is Class B acid phosphatase from Enterobacter sp. (strain 638).